A 150-amino-acid chain; its full sequence is Anthrone oxygenase gedH (150 aa).

The next 4 helical transmembrane spans lie at 1 to 21, 41 to 61, 73 to 93, and 128 to 148; these read MANP…PVFL, GHKL…WVAA, PVLA…CMVS, and LFPL…LVGG.

The protein belongs to the anthrone oxygenase family.

The protein resides in the membrane. The enzyme catalyses emodin anthrone + O2 = emodin + H2O + H(+). The protein operates within secondary metabolite biosynthesis. Anthrone oxygenase; part of the gene cluster that mediates the biosynthesis of geodin, an intermediate in the biosynthesis of other natural products. The pathway begins with the synthesis of atrochrysone thioester by the polyketide synthase (PKS) gedC. The atrochrysone carboxyl ACP thioesterase gedB then breaks the thioester bond and releases the atrochrysone carboxylic acid from gedC. The atrochrysone carboxylic acid is then converted to atrochrysone which is further transformed into emodin anthrone. The next step is performed by the emodin anthrone oxygenase gedH that catalyzes the oxidation of emodinanthrone to emodin. Emodin O-methyltransferase encoded probably by gedA then catalyzes methylation of the 8-hydroxy group of emodin to form questin. Ring cleavage of questin by questin oxidase gedK leads to desmethylsulochrin via several intermediates including questin epoxide. Another methylation step probably catalyzed by methyltransferase gedG leads to the formation of sulochrin which is further converted to dihydrogeodin by the sulochrin halogenase gedL. Finally, the dihydrogeodin oxidase gedJ catalyzes the stereospecific phenol oxidative coupling reaction converting dihydrogeodin to geodin. The sequence is that of Anthrone oxygenase gedH from Aspergillus terreus (strain NIH 2624 / FGSC A1156).